Here is a 152-residue protein sequence, read N- to C-terminus: UPF0266 membrane protein ESA_01432 (152 aa).

The next 3 helical transmembrane spans lie at 1–21 (MTLT…WAIY), 45–65 (ADSL…VASH), and 67–87 (ALLT…LFWI).

This sequence belongs to the UPF0266 family.

The protein resides in the cell inner membrane. This Cronobacter sakazakii (strain ATCC BAA-894) (Enterobacter sakazakii) protein is UPF0266 membrane protein ESA_01432.